Reading from the N-terminus, the 195-residue chain is Nuclear transcription factor Y subunit C-10 (195 aa).

The segment at 1 to 24 (MRRPKSSHVRMEPVAPRSHNTMPM) is disordered.

This sequence belongs to the NFYC/HAP5 subunit family. As to quaternary structure, heterotrimeric transcription factor composed of three components, NF-YA, NF-YB and NF-YC. NF-YB and NF-YC must interact and dimerize for NF-YA association and DNA binding.

It is found in the nucleus. Stimulates the transcription of various genes by recognizing and binding to a CCAAT motif in promoters. This is Nuclear transcription factor Y subunit C-10 (NFYC10) from Arabidopsis thaliana (Mouse-ear cress).